A 198-amino-acid chain; its full sequence is Syndecan-4 (198 aa).

An N-terminal signal peptide occupies residues 1–18 (MAPARLFALLLLFVGGVA). Over 19 to 145 (ESIRETEVID…QGSNIFERTE (127 aa)) the chain is Extracellular. 3 O-linked (Xyl...) (glycosaminoglycan) serine glycosylation sites follow: Ser39, Ser61, and Ser63. The O-linked (Xyl...) (chondroitin sulfate) serine glycan is linked to Ser95. Residues 146-170 (VLAALIVGGIVGILFAVFLILLLMY) traverse the membrane as a helical segment. At 171 to 198 (RMKKKDEGSYDLGKKPIYKKAPTNEFYA) the chain is on the cytoplasmic side.

This sequence belongs to the syndecan proteoglycan family. As to quaternary structure, homodimer. Interacts with CDCP1 and SDCBP. Interacts (via its cytoplasmic domain) with GIPC (via its PDZ domain). Interacts (via its cytoplasmic domain) with NUDT16L1. Interacts with DNM2; this interaction is markedly enhanced at focal ahesion site upon induction of focal adhesions and stress-fiber formation. Shedding is enhanced by a number of factors such as heparanase, thrombin or EGF. Also by stress and wound healing. PMA-mediated shedding is inhibited by TIMP3. In terms of processing, O-glycosylated; contains both chondroitin sulfate and heparan sulfate. Ser-39, Ser-61 and Ser-63 can all be modified by either chondroitin sulfate or heparan sulfate, and the protein exists in forms that contain only chondroitin sulfate, only heparan sulfate and both chondroitin sulfate and heparan sulfate.

It is found in the membrane. Its subcellular location is the secreted. In terms of biological role, cell surface proteoglycan which regulates exosome biogenesis in concert with SDCBP and PDCD6IP. This chain is Syndecan-4, found in Pongo abelii (Sumatran orangutan).